Consider the following 311-residue polypeptide: Lipoyl synthase (311 aa).

Residues Cys-55, Cys-60, Cys-66, Cys-81, Cys-85, Cys-88, and Ser-292 each contribute to the [4Fe-4S] cluster site. The Radical SAM core domain maps to 67 to 281; the sequence is WEDREATFLI…ARFAEGLGFA (215 aa).

The protein belongs to the radical SAM superfamily. Lipoyl synthase family. [4Fe-4S] cluster serves as cofactor.

Its subcellular location is the cytoplasm. The enzyme catalyses [[Fe-S] cluster scaffold protein carrying a second [4Fe-4S](2+) cluster] + N(6)-octanoyl-L-lysyl-[protein] + 2 oxidized [2Fe-2S]-[ferredoxin] + 2 S-adenosyl-L-methionine + 4 H(+) = [[Fe-S] cluster scaffold protein] + N(6)-[(R)-dihydrolipoyl]-L-lysyl-[protein] + 4 Fe(3+) + 2 hydrogen sulfide + 2 5'-deoxyadenosine + 2 L-methionine + 2 reduced [2Fe-2S]-[ferredoxin]. Its pathway is protein modification; protein lipoylation via endogenous pathway; protein N(6)-(lipoyl)lysine from octanoyl-[acyl-carrier-protein]: step 2/2. In terms of biological role, catalyzes the radical-mediated insertion of two sulfur atoms into the C-6 and C-8 positions of the octanoyl moiety bound to the lipoyl domains of lipoate-dependent enzymes, thereby converting the octanoylated domains into lipoylated derivatives. The chain is Lipoyl synthase from Mycobacterium bovis (strain ATCC BAA-935 / AF2122/97).